The sequence spans 230 residues: Orotidine 5'-phosphate decarboxylase (230 aa).

Substrate is bound by residues Asp11, Lys34, 61 to 70 (DLKLHDIPNT), Thr117, Arg179, Gln188, Gly208, and Arg209. Residue Lys63 is the Proton donor of the active site.

Belongs to the OMP decarboxylase family. Type 1 subfamily. In terms of assembly, homodimer.

The enzyme catalyses orotidine 5'-phosphate + H(+) = UMP + CO2. It functions in the pathway pyrimidine metabolism; UMP biosynthesis via de novo pathway; UMP from orotate: step 2/2. In terms of biological role, catalyzes the decarboxylation of orotidine 5'-monophosphate (OMP) to uridine 5'-monophosphate (UMP). The sequence is that of Orotidine 5'-phosphate decarboxylase from Streptococcus pyogenes serotype M18 (strain MGAS8232).